We begin with the raw amino-acid sequence, 219 residues long: MTENKTVLYSYWRSSCSWRVRVALAYKKIKYEYKAIHLLKDGGQQKSDEYSKLNPMKAIPTLEIDGHIIGQSLAILEYLEETHPENPLMPKGSYERAIARQMMQIIGSDIQPLQNLKVLGLIAQYSGDDSKKSEWARTVITNGFNGLEKLLEKHSGKFCVGDSVSFADLCLPAQVYNANRFNVDMTPYPNITRVNQHLLTIPEFIEALPQNQPDAEPQC.

The GST N-terminal domain maps to 4 to 87; the sequence is NKTVLYSYWR…YLEETHPENP (84 aa). Residues 14 to 19, glutamine 45, 71 to 72, glutamine 111, and 115 to 117 each bind glutathione; these read SSCSWR, QS, and NLK. A GST C-terminal domain is found at 92–217; sequence GSYERAIARQ…LPQNQPDAEP (126 aa).

The protein belongs to the GST superfamily. Zeta family. Glutathione serves as cofactor.

It carries out the reaction 4-maleylacetoacetate = 4-fumarylacetoacetate. It functions in the pathway amino-acid degradation; L-phenylalanine degradation; acetoacetate and fumarate from L-phenylalanine: step 5/6. The chain is Maleylacetoacetate isomerase (mai) from Dictyostelium discoideum (Social amoeba).